We begin with the raw amino-acid sequence, 751 residues long: Kelch-like protein 1 (751 aa).

Composition is skewed to low complexity over residues 25–36 (PSPASSSPAGGS) and 74–90 (SSSS…ASSS). 3 disordered regions span residues 25–54 (PSPA…GPSQ), 69–98 (FWKK…LNGT), and 157–184 (SSIQ…SDLD). A compositionally biased stretch (polar residues) spans 170 to 184 (LTSTNHSLTPQSDLD). A BTB domain is found at 215–282 (CDVILIVGNR…AYTGCLELKE (68 aa)). 6 Kelch repeats span residues 463–509 (TLYA…VIDD), 510–556 (KLFV…VLEG), 558–603 (IYAV…ALNG), 604–650 (KLYS…TCDG), 652–703 (LYAV…LLGD), and 704–750 (RLYA…VIKQ).

In terms of tissue distribution, highly expressed in brain.

The protein resides in the cytoplasm. The protein localises to the cytoskeleton. Functionally, may play a role in organizing the actin cytoskeleton of the brain cells. The polypeptide is Kelch-like protein 1 (Klhl1) (Mus musculus (Mouse)).